We begin with the raw amino-acid sequence, 167 residues long: Small ribosomal subunit protein uS5 (167 aa).

Positions 12 to 75 constitute an S5 DRBM domain; that stretch reads LQEKLIAVNR…EKARRNMVTV (64 aa).

Belongs to the universal ribosomal protein uS5 family. As to quaternary structure, part of the 30S ribosomal subunit. Contacts proteins S4 and S8.

Its function is as follows. With S4 and S12 plays an important role in translational accuracy. In terms of biological role, located at the back of the 30S subunit body where it stabilizes the conformation of the head with respect to the body. This chain is Small ribosomal subunit protein uS5, found in Shewanella denitrificans (strain OS217 / ATCC BAA-1090 / DSM 15013).